A 1593-amino-acid chain; its full sequence is Nischarin (1593 aa).

The interval 1 to 134 (MAAATLSFGP…GVTAALAEEL (134 aa)) is necessary for binding to phosphoinositide-3-P; not sufficient for targeting to endosomes. A PX domain is found at 12–122 (REAEPAKEAR…AHFLHFHLYE (111 aa)). Residues 121–695 (YEVNGVTAAL…ERLALEWALG (575 aa)) form a necessary for homooligomerization and targeting to endosomes region. The interaction with PAK1 stretch occupies residues 246–869 (MSVRFSATSM…LVYSDKRMVQ (624 aa)). LRR repeat units follow at residues 290-311 (ALTTLDLSHNSICEIDESVKLI), 313-334 (KIEYLDLSHNGLRVVDNLQHLY), 335-356 (NLVHLDLSYNKLSSLEGVHTKL), 358-379 (NVKTLNLAGNFLESLSGLHKLY), 380-401 (SLVNVDLRDNRIEQLDEVKSIG), and 405-426 (CLERLTLLNNPLSIIPDYRTKV). Basic and acidic residues predominate over residues 466 to 480 (SKLSNTEKKAGEDFR). A disordered region spans residues 466–499 (SKLSNTEKKAGEDFRLPPAPCIRPGGSPPAAPAS). Positions 482–496 (PPAPCIRPGGSPPAA) are enriched in pro residues. 3 positions are modified to phosphoserine: S543, S545, and S548. Residues 624 to 694 (IEAANQREEA…EERLALEWAL (71 aa)) adopt a coiled-coil conformation. The segment at 629 to 687 (QREEAHGEQGEEEEEEEEEEDVAENRYFEMGPPDAEEEEGSGQGEEDEEDEDEEAEEER) is disordered. Acidic residues-rich tracts occupy residues 638–650 (GEEEEEEEEEEDV) and 662–685 (DAEEEEGSGQGEEDEEDEDEEAEE). Residues 661–869 (PDAEEEEGSG…LVYSDKRMVQ (209 aa)) are interaction with LIMK. The interaction with ITGA5 stretch occupies residues 709-807 (KVLWCFLIHV…ANLHEFHADL (99 aa)). The interval 1016–1185 (NPSAKPRNQP…PAGGPAPAEA (170 aa)) is disordered. Low complexity-rich tracts occupy residues 1038-1069 (ETPADAPAPAAVPPTASAPAPAEALAPDLAPV) and 1081-1158 (AEAP…APAP). 10 consecutive repeat copies span residues 1081-1086 (AEAPAA), 1087-1092 (AEAPAA), 1093-1098 (AEAPAA), 1099-1104 (AEAPAA), 1105-1110 (AEAPAA), 1111-1116 (AEAPAA), 1123-1128 (AEAPAA), 1129-1134 (AEAPAA), 1135-1140 (AEAPAA), and 1141-1146 (AEAPAA). A 10 X 6 AA tandem repeat of A-E-A-P-A-A region spans residues 1081 to 1146 (AEAPAAAEAP…APAAAEAPAA (66 aa)). A compositionally biased stretch (pro residues) spans 1159–1179 (NQAPAPARGPAPARGPAPAGG). T1371 is modified (phosphothreonine). Position 1373 is a phosphoserine (S1373).

In terms of assembly, homooligomer. Interacts with GRB2. Interacts with PIK3R1; probably associates with the PI3-kinase complex. Interacts with IRS4. Found in a complex with ITGA5 and PAK1. Found in a complex with LIMK1 and PAK1. Interacts with ITGA5 (via cytoplasmic domain); this interaction is direct. Interacts with PAK1 (via kinase domain); this interaction is direct and is increased upon activation of PAK1. Interacts with LIMK1 (via PDZ and kinase domain); this interaction is direct. Interacts with LIMK2; this interaction depends on LIMK2 activity. Interacts with RAC1 (activated state). Interacts with STK11; this interaction may increase STK11 activity. In terms of tissue distribution, highly expressed in brain and kidney. Moderately expressed in heart, liver, lung and skeletal muscle. Not detected in spleen and testis.

The protein localises to the cell membrane. It is found in the cytoplasm. Its subcellular location is the early endosome. It localises to the recycling endosome. Functionally, acts either as the functional imidazoline-1 receptor (I1R) candidate or as a membrane-associated mediator of the I1R signaling. Binds numerous imidazoline ligands that induces initiation of cell-signaling cascades triggering to cell survival, growth and migration. Its activation by the agonist rilmenidine induces an increase in phosphorylation of mitogen-activated protein kinases MAPK1 and MAPK3 in rostral ventrolateral medulla (RVLM) neurons that exhibited rilmenidine-evoked hypotension. Blocking its activation with efaroxan abolished rilmenidine-induced mitogen-activated protein kinase phosphorylation in RVLM neurons. Acts as a modulator of Rac-regulated signal transduction pathways. Suppresses Rac1-stimulated cell migration by interacting with PAK1 and inhibiting its kinase activity. Also blocks Pak-independent Rac signaling by interacting with RAC1 and inhibiting Rac1-stimulated NF-kB response element and cyclin D1 promoter activation. Also inhibits LIMK1 kinase activity by reducing LIMK1 'Tyr-508' phosphorylation. Inhibits Rac-induced cell migration and invasion in breast and colon epithelial cells. Inhibits lamellipodia formation, when overexpressed. Plays a role in protection against apoptosis. Involved in association with IRS4 in the enhancement of insulin activation of MAPK1 and MAPK3. When overexpressed, induces a redistribution of cell surface ITGA5 integrin to intracellular endosomal structures. In Mus musculus (Mouse), this protein is Nischarin (Nisch).